A 296-amino-acid chain; its full sequence is MYLSLLKSLNRLHPRAWDFLQLARMDKPIGIYLLLWPTLVALWIAAEGQPSLSHVLIFTFGVVLTRAGGCAINDFADRKVDGQVKRTDQRPLATGKVSAKEALILFAVLMGAAFLLVLCTNATTVWLSFGALALAACYPFMKRYTYYPQVVLGAAYSWGILMTFTAQNGELPATAWLLYIANLLWTVGYDTYYAMTDRDDDLKIGVKSTAILFGDADRVIILTLQGLSLGCLLLAGARFNLGGWFHLGLAVAAACFAWEFWYTRDRDRMKCFKAFLHNHWAGLAIFVGVVLDYALR.

8 helical membrane passes run proline 28 to glycine 48, leucine 52 to isoleucine 72, alanine 102 to alanine 122, tyrosine 146 to alanine 166, glycine 169 to tyrosine 189, valine 219 to phenylalanine 239, leucine 241 to tryptophan 261, and phenylalanine 275 to leucine 295.

It belongs to the UbiA prenyltransferase family. It depends on Mg(2+) as a cofactor.

The protein resides in the cell inner membrane. It catalyses the reaction all-trans-octaprenyl diphosphate + 4-hydroxybenzoate = 4-hydroxy-3-(all-trans-octaprenyl)benzoate + diphosphate. Its pathway is cofactor biosynthesis; ubiquinone biosynthesis. Its function is as follows. Catalyzes the prenylation of para-hydroxybenzoate (PHB) with an all-trans polyprenyl group. Mediates the second step in the final reaction sequence of ubiquinone-8 (UQ-8) biosynthesis, which is the condensation of the polyisoprenoid side chain with PHB, generating the first membrane-bound Q intermediate 3-octaprenyl-4-hydroxybenzoate. In Pseudomonas fluorescens (strain ATCC BAA-477 / NRRL B-23932 / Pf-5), this protein is 4-hydroxybenzoate octaprenyltransferase.